A 248-amino-acid chain; its full sequence is Triosephosphate isomerase (248 aa).

Position 9–11 (9–11) interacts with substrate; sequence NWK. The Electrophile role is filled by H94. E166 acts as the Proton acceptor in catalysis. Substrate is bound by residues G172, S212, and 233–234; that span reads GG.

It belongs to the triosephosphate isomerase family. Homodimer.

The protein localises to the cytoplasm. The enzyme catalyses D-glyceraldehyde 3-phosphate = dihydroxyacetone phosphate. The protein operates within carbohydrate biosynthesis; gluconeogenesis. It functions in the pathway carbohydrate degradation; glycolysis; D-glyceraldehyde 3-phosphate from glycerone phosphate: step 1/1. In terms of biological role, involved in the gluconeogenesis. Catalyzes stereospecifically the conversion of dihydroxyacetone phosphate (DHAP) to D-glyceraldehyde-3-phosphate (G3P). The protein is Triosephosphate isomerase of Thermoanaerobacter pseudethanolicus (strain ATCC 33223 / 39E) (Clostridium thermohydrosulfuricum).